The primary structure comprises 413 residues: Type IV pilus assembly protein TapC (413 aa).

A run of 4 helical transmembrane segments spans residues 180–200, 227–247, 286–306, and 386–406; these read YPAM…LFVI, FMQH…FLYV, LSTT…AAGA, and IMVV…LPIF.

It belongs to the GSP F family.

The protein localises to the cell inner membrane. Functionally, involved in the translocation of the type IV pilin. In Aeromonas hydrophila, this protein is Type IV pilus assembly protein TapC (tapC).